The following is a 244-amino-acid chain: Phosphoribosyl isomerase A (244 aa).

Asp10 serves as the catalytic Proton acceptor. Asp129 serves as the catalytic Proton donor.

This sequence belongs to the HisA/HisF family.

Its subcellular location is the cytoplasm. It carries out the reaction 1-(5-phospho-beta-D-ribosyl)-5-[(5-phospho-beta-D-ribosylamino)methylideneamino]imidazole-4-carboxamide = 5-[(5-phospho-1-deoxy-D-ribulos-1-ylimino)methylamino]-1-(5-phospho-beta-D-ribosyl)imidazole-4-carboxamide. The catalysed reaction is N-(5-phospho-beta-D-ribosyl)anthranilate = 1-(2-carboxyphenylamino)-1-deoxy-D-ribulose 5-phosphate. Its pathway is amino-acid biosynthesis; L-histidine biosynthesis; L-histidine from 5-phospho-alpha-D-ribose 1-diphosphate: step 4/9. It functions in the pathway amino-acid biosynthesis; L-tryptophan biosynthesis; L-tryptophan from chorismate: step 3/5. Involved in both the histidine and tryptophan biosynthetic pathways. This Mycobacterium tuberculosis (strain CDC 1551 / Oshkosh) protein is Phosphoribosyl isomerase A (priA).